The sequence spans 404 residues: Coenzyme F(430) synthetase (404 aa).

Residue 112-117 (GVKGKT) coordinates ATP.

It belongs to the MurCDEF family.

The catalysed reaction is 15,17(3)-seco-F430-17(3)-acid + ATP = coenzyme F430 + ADP + phosphate. Involved in the biosynthesis of the unique nickel-containing tetrapyrrole coenzyme F430, the prosthetic group of methyl-coenzyme M reductase (MCR), which plays a key role in methanogenesis and anaerobic methane oxidation. Catalyzes the activation the g-propionate side chain of 15,17(3)-seco-F430-17(3)-acid (seco-F430) for intramolecular C-C bond formation to yield the carbocyclic F ring of coenzyme F430. The sequence is that of Coenzyme F(430) synthetase from Methanocaldococcus jannaschii (strain ATCC 43067 / DSM 2661 / JAL-1 / JCM 10045 / NBRC 100440) (Methanococcus jannaschii).